The sequence spans 268 residues: MAGNLLNGLRAAIAFLTTLPVRIVDGDYDAFADRQYLFIPVAIVTGLLLGVAGTLFQCILPAPFAAVLTVACIFLLTGINHLDGLSDFGDGLIASGPREKKVRAMKDVHAGAGGLLFMAMDLLFLFALAMTFAGSPTWLFVPLLVAEGCAKVAQITIIAFGKSAHEGMGSYMIARMKKEHYLAAVIGAWIAIGIAIIGAAIIPGGGNPLRVIMAGGLAMLSPLAVALIILIISDRNFGGVNGDVIGAANEIARIAALGVMGAVLWMRF.

Helical transmembrane passes span 1 to 21, 36 to 56, 59 to 79, 112 to 132, 138 to 158, 182 to 202, 212 to 232, and 244 to 264; these read MAGN…TLPV, YLFI…GTLF, ILPA…LTGI, AGGL…AMTF, WLFV…ITII, LAAV…AAII, IMAG…ILII, and VIGA…GAVL.

It belongs to the CobS family. Requires Mg(2+) as cofactor.

Its subcellular location is the cell membrane. It carries out the reaction alpha-ribazole + adenosylcob(III)inamide-GDP = adenosylcob(III)alamin + GMP + H(+). The enzyme catalyses alpha-ribazole 5'-phosphate + adenosylcob(III)inamide-GDP = adenosylcob(III)alamin 5'-phosphate + GMP + H(+). It participates in cofactor biosynthesis; adenosylcobalamin biosynthesis; adenosylcobalamin from cob(II)yrinate a,c-diamide: step 7/7. Joins adenosylcobinamide-GDP and alpha-ribazole to generate adenosylcobalamin (Ado-cobalamin). Also synthesizes adenosylcobalamin 5'-phosphate from adenosylcobinamide-GDP and alpha-ribazole 5'-phosphate. This is Adenosylcobinamide-GDP ribazoletransferase from Methanocella arvoryzae (strain DSM 22066 / NBRC 105507 / MRE50).